The sequence spans 344 residues: Hydrophobic dipeptide epimerase (344 aa).

Substrate contacts are provided by residues Thr126 and 151–153; that span reads KIK. Mg(2+) contacts are provided by Asp184, Glu210, and Asp235. Substrate contacts are provided by residues Lys257 and 307–309; that span reads DLD.

Belongs to the mandelate racemase/muconate lactonizing enzyme family. The cofactor is Mg(2+).

Its function is as follows. Dipeptide epimerase with a preference for hydrophobic substrates. Catalyzes the epimerization of L-Ala-L-Thr, L-Ala-L-Met, L-Ala-L-His, L-Ala-L-Phe, L-Ala-L-Tyr, L-Ala-L-Trp, L-Ile-L-Ala, L-Ile-L-Ser, L-Ile-L-Met, L-Ile-L-His, L-Ile-L-Phe, L-Ile-L-Tyr, L-Ile-L-Trp, L-Phe-L-Met, L-Phe-L-His, L-Phe-L-Phe, L-Phe-L-Tyr, L-Phe-L-Trp, L-Phe-L-Ser, L-Phe-L-Thr and L-Phe-L-Lys (in vitro). The sequence is that of Hydrophobic dipeptide epimerase from Roseobacter litoralis (strain ATCC 49566 / DSM 6996 / JCM 21268 / NBRC 15278 / OCh 149).